We begin with the raw amino-acid sequence, 571 residues long: Dihydroxy-acid dehydratase (571 aa).

C56 is a binding site for [2Fe-2S] cluster. Residue D88 coordinates Mg(2+). [2Fe-2S] cluster is bound at residue C129. Mg(2+)-binding residues include D130 and K131. K131 is modified (N6-carboxylysine). C201 contributes to the [2Fe-2S] cluster binding site. Residue E452 participates in Mg(2+) binding. Catalysis depends on S478, which acts as the Proton acceptor.

This sequence belongs to the IlvD/Edd family. In terms of assembly, homodimer. [2Fe-2S] cluster is required as a cofactor. Mg(2+) serves as cofactor.

The enzyme catalyses (2R)-2,3-dihydroxy-3-methylbutanoate = 3-methyl-2-oxobutanoate + H2O. The catalysed reaction is (2R,3R)-2,3-dihydroxy-3-methylpentanoate = (S)-3-methyl-2-oxopentanoate + H2O. It participates in amino-acid biosynthesis; L-isoleucine biosynthesis; L-isoleucine from 2-oxobutanoate: step 3/4. Its pathway is amino-acid biosynthesis; L-valine biosynthesis; L-valine from pyruvate: step 3/4. Functionally, functions in the biosynthesis of branched-chain amino acids. Catalyzes the dehydration of (2R,3R)-2,3-dihydroxy-3-methylpentanoate (2,3-dihydroxy-3-methylvalerate) into 2-oxo-3-methylpentanoate (2-oxo-3-methylvalerate) and of (2R)-2,3-dihydroxy-3-methylbutanoate (2,3-dihydroxyisovalerate) into 2-oxo-3-methylbutanoate (2-oxoisovalerate), the penultimate precursor to L-isoleucine and L-valine, respectively. The chain is Dihydroxy-acid dehydratase from Streptococcus mutans serotype c (strain ATCC 700610 / UA159).